A 337-amino-acid polypeptide reads, in one-letter code: Lipoyl synthase (337 aa).

The [4Fe-4S] cluster site is built by Cys-81, Cys-86, Cys-92, Cys-107, Cys-111, Cys-114, and Ser-323. Positions 93-312 (FSHGTATFMI…EDYGNALGFS (220 aa)) constitute a Radical SAM core domain.

The protein belongs to the radical SAM superfamily. Lipoyl synthase family. The cofactor is [4Fe-4S] cluster.

The protein localises to the cytoplasm. The catalysed reaction is [[Fe-S] cluster scaffold protein carrying a second [4Fe-4S](2+) cluster] + N(6)-octanoyl-L-lysyl-[protein] + 2 oxidized [2Fe-2S]-[ferredoxin] + 2 S-adenosyl-L-methionine + 4 H(+) = [[Fe-S] cluster scaffold protein] + N(6)-[(R)-dihydrolipoyl]-L-lysyl-[protein] + 4 Fe(3+) + 2 hydrogen sulfide + 2 5'-deoxyadenosine + 2 L-methionine + 2 reduced [2Fe-2S]-[ferredoxin]. It functions in the pathway protein modification; protein lipoylation via endogenous pathway; protein N(6)-(lipoyl)lysine from octanoyl-[acyl-carrier-protein]: step 2/2. Catalyzes the radical-mediated insertion of two sulfur atoms into the C-6 and C-8 positions of the octanoyl moiety bound to the lipoyl domains of lipoate-dependent enzymes, thereby converting the octanoylated domains into lipoylated derivatives. This Xanthomonas euvesicatoria pv. vesicatoria (strain 85-10) (Xanthomonas campestris pv. vesicatoria) protein is Lipoyl synthase.